Here is a 109-residue protein sequence, read N- to C-terminus: Tetracenomycin F2 cyclase (109 aa).

As to quaternary structure, homodimer.

The catalysed reaction is tetracenomycin F2 + H(+) = tetracenomycin F1 + H2O. It participates in antibiotic biosynthesis; tetracenomycin C biosynthesis. Its function is as follows. Catalyzing the conversion of tetracenomycin F2 to tetracenomycin F1. This is Tetracenomycin F2 cyclase (tcmI) from Streptomyces glaucescens.